The sequence spans 544 residues: Flagellar hook-associated protein 1 (544 aa).

This sequence belongs to the flagella basal body rod proteins family.

Its subcellular location is the secreted. It is found in the bacterial flagellum. The chain is Flagellar hook-associated protein 1 (flgK) from Buchnera aphidicola subsp. Schizaphis graminum (strain Sg).